Here is a 419-residue protein sequence, read N- to C-terminus: L-rhamnose isomerase (419 aa).

Mn(2+) is bound by residues His262, Asp294, and Asp296.

It belongs to the rhamnose isomerase family. Homotetramer. The cofactor is Mn(2+).

It is found in the cytoplasm. It carries out the reaction L-rhamnopyranose = L-rhamnulose. It participates in carbohydrate degradation; L-rhamnose degradation; glycerone phosphate from L-rhamnose: step 1/3. In terms of biological role, catalyzes the interconversion of L-rhamnose and L-rhamnulose. This Klebsiella pneumoniae (strain 342) protein is L-rhamnose isomerase.